The chain runs to 282 residues: uncharacterized protein (282 aa).

The HTH rpiR-type domain maps to Met1 to Gln77. The segment at residues Ser37 to Gln56 is a DNA-binding region (H-T-H motif). An SIS domain is found at Cys125–Glu265.

This is an uncharacterized protein from Escherichia coli (strain K12).